The sequence spans 533 residues: Glycoprotein (533 aa).

A signal peptide spans 1-19 (MPLNAVIFTLLLRCSICLG). At 20-459 (KFPFYTIPDK…DLGLPEWKRY (440 aa)) the chain is on the virion surface side. Residues 460–480 (FLIGVSAVALLALSIIIAVCC) traverse the membrane as a helical segment. Cys-480 is lipidated: S-palmitoyl cysteine; by host. Residues 481–533 (KRFRKRKKSKPGPVELTRKVSVISKGNGPVPSWESYKEGTTGDVRNTTPSTRE) are Intravirion-facing. Positions 492–533 (GPVELTRKVSVISKGNGPVPSWESYKEGTTGDVRNTTPSTRE) are disordered. Over residues 523-533 (DVRNTTPSTRE) the composition is skewed to polar residues.

Belongs to the lyssavirus glycoprotein family. As to quaternary structure, homotrimer. Interacts with matrix protein. Post-translationally, glycosylated and palmitoylated by host. Glycosylation is crucial for glycoprotein export at the cell surface.

It localises to the virion membrane. Functionally, attaches the virus to host cellular receptor, inducing endocytosis of the virion. In the endosome, the acidic pH induces conformational changes in the glycoprotein trimer, which trigger fusion between virus and cell membrane. The polypeptide is Glycoprotein (G) (Duvenhage virus (DUVV)).